Here is a 245-residue protein sequence, read N- to C-terminus: tRNA1(Val) (adenine(37)-N6)-methyltransferase (245 aa).

The protein belongs to the methyltransferase superfamily. tRNA (adenine-N(6)-)-methyltransferase family.

It localises to the cytoplasm. It catalyses the reaction adenosine(37) in tRNA1(Val) + S-adenosyl-L-methionine = N(6)-methyladenosine(37) in tRNA1(Val) + S-adenosyl-L-homocysteine + H(+). Its function is as follows. Specifically methylates the adenine in position 37 of tRNA(1)(Val) (anticodon cmo5UAC). The polypeptide is tRNA1(Val) (adenine(37)-N6)-methyltransferase (Escherichia coli O139:H28 (strain E24377A / ETEC)).